The following is a 423-amino-acid chain: 3-phosphoshikimate 1-carboxyvinyltransferase (423 aa).

3-phosphoshikimate-binding residues include lysine 28, serine 29, and arginine 33. Lysine 28 is a phosphoenolpyruvate binding site. Phosphoenolpyruvate is bound by residues glycine 96 and arginine 124. 3-phosphoshikimate-binding residues include serine 169, serine 170, glutamine 171, serine 198, glutamate 312, and histidine 339. A phosphoenolpyruvate-binding site is contributed by glutamine 171. Glutamate 312 acts as the Proton acceptor in catalysis. Phosphoenolpyruvate is bound by residues arginine 343, arginine 384, and lysine 409.

Belongs to the EPSP synthase family. As to quaternary structure, monomer.

The protein resides in the cytoplasm. The enzyme catalyses 3-phosphoshikimate + phosphoenolpyruvate = 5-O-(1-carboxyvinyl)-3-phosphoshikimate + phosphate. Its pathway is metabolic intermediate biosynthesis; chorismate biosynthesis; chorismate from D-erythrose 4-phosphate and phosphoenolpyruvate: step 6/7. Catalyzes the transfer of the enolpyruvyl moiety of phosphoenolpyruvate (PEP) to the 5-hydroxyl of shikimate-3-phosphate (S3P) to produce enolpyruvyl shikimate-3-phosphate and inorganic phosphate. This chain is 3-phosphoshikimate 1-carboxyvinyltransferase, found in Acidothermus cellulolyticus (strain ATCC 43068 / DSM 8971 / 11B).